Reading from the N-terminus, the 845-residue chain is Proto-oncogene vav (845 aa).

One can recognise a Calponin-homology (CH) domain in the interval 1-119 (MELWRQCTHW…YTLSALSWTP (119 aa)). One can recognise a DH domain in the interval 194–373 (KRCCCLREIQ…RDLAQCVNEV (180 aa)). Residues 402 to 504 (RPKIDGELKI…WMEQFEMAIS (103 aa)) enclose the PH domain. A Phorbol-ester/DAG-type zinc finger spans residues 515–564 (GHDFQMFSFEETTSCKACQMLLRGTFYQGYRCHRCRASAHKECLGRVPPC). Positions 592 to 660 (LGLPKMEVFQ…PCNRVKPYVH (69 aa)) constitute an SH3 1 domain. In terms of domain architecture, SH2 spans 671–765 (WYAGPMERAG…SLDTTLQFPF (95 aa)). Residues 782 to 842 (KYFGTAKARY…PANYVEEDYS (61 aa)) form the SH3 2 domain. A phosphotyrosine mark is found at Tyr826 and Tyr844.

As to quaternary structure, interacts with SHB. Interacts with SH2B2, GRB2, GRB3, DOCK2, SLA, TEC and ZNF655/VIK. Interacts with SIAH2; without leading to its degradation. Associates with BLNK, PLCG1, GRB2 and NCK1 in a B-cell antigen receptor-dependent fashion. Interacts with CBLB; which inhibits tyrosine phosphorylation and down-regulates activity. May interact with CCPG1. Interacts with CLNK. Interacts with THEMIS2. Interacts with NEK3 and this interaction is prolactin-dependent. Interacts with ITK. Interacts with PTK2B/PYK2. Interacts with HCK. Interacts with PTK2B/PYK2. Interacts (via SH2 domain) with SYK. Interacts with ANKRD54. Interacts with CD6. Interacts with isoform 2 of CRACR2A. Interacts with LCP2; this interaction plays a role in TCR-mediated cytokine production. Post-translationally, phosphorylated on tyrosine residues by HCK in response to IFNG and bacterial lipopolysaccharide (LPS). Phosphorylated by FYN. In terms of tissue distribution, widely expressed in hematopoietic cells but not in other cell types.

Functionally, couples tyrosine kinase signals with the activation of the Rho/Rac GTPases, thus leading to cell differentiation and/or proliferation. This Homo sapiens (Human) protein is Proto-oncogene vav (VAV1).